The chain runs to 37 residues: Large ribosomal subunit protein bL36c (37 aa).

This sequence belongs to the bacterial ribosomal protein bL36 family.

The protein localises to the plastid. It is found in the chloroplast. The chain is Large ribosomal subunit protein bL36c from Thalassiosira pseudonana (Marine diatom).